Here is a 270-residue protein sequence, read N- to C-terminus: Sorting nexin-11 (270 aa).

Residues 16-132 form the PX domain; the sequence is VITVRVQDPR…HLFLQSQLSV (117 aa). A 1,2-diacyl-sn-glycero-3-phospho-(1D-myo-inositol-3-phosphate) contacts are provided by Arg59, Lys85, and Arg99. The interval 135–139 is important for membrane trafficking; that stretch reads IEACV. Residues 168–177 show a composition bias toward basic and acidic residues; sequence SSSHLAKGDQ. Positions 168-203 are disordered; the sequence is SSSHLAKGDQPKSCCFLPRSGRRSSPSPPPSEEKDH.

The protein belongs to the sorting nexin family. As to quaternary structure, monomer. Interacts with TRPV3; this interaction promotes TRPV3 trafficking from the cell membrane to lysosome for degradation.

It is found in the cell membrane. The protein resides in the endosome. The protein localises to the cytoplasm. Its function is as follows. Phosphoinositide-binding protein involved in protein sorting and membrane trafficking in endosomes. Regulates the levels of TRPV3 by promoting its trafficking from the cell membrane to lysosome for degradation. This is Sorting nexin-11 (SNX11) from Homo sapiens (Human).